A 373-amino-acid polypeptide reads, in one-letter code: Putative glutamate--cysteine ligase 2 (373 aa).

This sequence belongs to the glutamate--cysteine ligase type 2 family. YbdK subfamily. In terms of assembly, homodimer.

It carries out the reaction L-cysteine + L-glutamate + ATP = gamma-L-glutamyl-L-cysteine + ADP + phosphate + H(+). In terms of biological role, ATP-dependent carboxylate-amine ligase which exhibits weak glutamate--cysteine ligase activity. The polypeptide is Putative glutamate--cysteine ligase 2 (Enterobacter sp. (strain 638)).